Here is a 265-residue protein sequence, read N- to C-terminus: uncharacterized protein (265 aa).

A disordered region spans residues 122–145 (THYRDNGQTPPRDTRPHGGISLGG).

This is an uncharacterized protein from Zymomonas mobilis subsp. mobilis (strain ATCC 31821 / ZM4 / CP4).